A 512-amino-acid chain; its full sequence is Cytochrome P450 monooxygenase gliC (512 aa).

Residues 1–19 (MAFTLTILVPCMVLALVAA) form the signal peptide. 3 N-linked (GlcNAc...) asparagine glycosylation sites follow: Asn-118, Asn-421, and Asn-434. Position 452 (Cys-452) interacts with heme.

This sequence belongs to the cytochrome P450 family. The cofactor is heme.

It participates in mycotoxin biosynthesis. In terms of biological role, cytochrome P450 monooxygenase; part of the gene cluster that mediates the biosynthesis of gliotoxin, a member of the epipolythiodioxopiperazine (ETP) class of toxins characterized by a disulfide bridged cyclic dipeptide. The first step in gliotoxin biosynthesis is the condensation of serine and phenylalanine to form the cyclo-L-phenylalanyl-L-serine diketopiperazine (DKP) by the NRPS gliP. GliP is also able to produce the DKP cyclo-L-tryptophanyl-L-serine, suggesting that the substrate specificity of the first adenylation (A) domain in gliP is sufficiently relaxed to accommodate both L-Phe and L-Trp. The cytochrome P450 monooxygenase gliC has been shown to catalyze the subsequent hydroxylation of the alpha-carbon of L-Phe in cyclo-L-phenylalanyl-L-serine whereas the second cytochrome P450 enzyme, gliF, is presumably involved in the modification of the DKP side chain. The glutathione S-transferase (GST) gliG then forms a bis-glutathionylated biosynthetic intermediate which is responsible for the sulfurization of gliotoxin. This bis-glutathionylated intermediate is subsequently processed by the gamma-glutamyl cyclotransferase gliK to remove both gamma-glutamyl moieties. Subsequent processing via gliI yields a biosynthetic intermediate, which is N-methylated via the N-methyltransferase gliN, before the gliotoxin oxidoreductase gliT-mediated disulfide bridge closure. GliN-mediated amide methylation confers stability to ETP, damping the spontaneous formation of tri- and tetrasulfides. Intracellular dithiol gliotoxin oxidized by gliT is subsequently effluxed by gliA. Gliotoxin contributes to pathogenesis during invasive aspergillosis. In macrophages and neutrophils, gliotoxin showed inhibition of various different cell functions including cytokine production, antigen presentation, phagocytosis, and production of reactive oxygen species. The chain is Cytochrome P450 monooxygenase gliC from Aspergillus fumigatus (strain ATCC MYA-4609 / CBS 101355 / FGSC A1100 / Af293) (Neosartorya fumigata).